Reading from the N-terminus, the 408-residue chain is Myb/SANT-like DNA-binding domain-containing protein 4 (408 aa).

The region spanning 4 to 77 is the Myb-like domain; it reads LKRKRKSNFS…EVKRRYLDWR (74 aa). Residues 236-367 are a coiled coil; sequence HLLVTLEKQK…IEKERLQDAL (132 aa).

The chain is Myb/SANT-like DNA-binding domain-containing protein 4 (msantd4) from Xenopus tropicalis (Western clawed frog).